Consider the following 324-residue polypeptide: Glycerol-3-phosphate dehydrogenase [NAD(P)+] (324 aa).

NADPH contacts are provided by F11, R31, and K107. Residues K107 and G135 each coordinate sn-glycerol 3-phosphate. Residue A139 participates in NADPH binding. Sn-glycerol 3-phosphate is bound by residues K190, D245, S255, R256, and N257. K190 (proton acceptor) is an active-site residue. R256 serves as a coordination point for NADPH. Residues V278 and E279 each contribute to the NADPH site.

The protein belongs to the NAD-dependent glycerol-3-phosphate dehydrogenase family.

The protein localises to the cytoplasm. The catalysed reaction is sn-glycerol 3-phosphate + NAD(+) = dihydroxyacetone phosphate + NADH + H(+). It catalyses the reaction sn-glycerol 3-phosphate + NADP(+) = dihydroxyacetone phosphate + NADPH + H(+). It functions in the pathway membrane lipid metabolism; glycerophospholipid metabolism. Functionally, catalyzes the reduction of the glycolytic intermediate dihydroxyacetone phosphate (DHAP) to sn-glycerol 3-phosphate (G3P), the key precursor for phospholipid synthesis. This Anaplasma phagocytophilum (strain HZ) protein is Glycerol-3-phosphate dehydrogenase [NAD(P)+].